Reading from the N-terminus, the 267-residue chain is Trehalose-phosphate phosphatase (267 aa).

D20 serves as the catalytic Nucleophile. D20, D22, and D198 together coordinate Mg(2+). Residue 20–22 (DLD) coordinates substrate.

Belongs to the trehalose phosphatase family. Requires Mg(2+) as cofactor.

It catalyses the reaction alpha,alpha-trehalose 6-phosphate + H2O = alpha,alpha-trehalose + phosphate. It functions in the pathway glycan biosynthesis; trehalose biosynthesis. In terms of biological role, removes the phosphate from trehalose 6-phosphate to produce free trehalose. In Salmonella typhimurium (strain SL1344), this protein is Trehalose-phosphate phosphatase (otsB).